The primary structure comprises 320 residues: o-succinylbenzoate synthase (320 aa).

The active-site Proton donor is K133. 3 residues coordinate Mg(2+): D161, E190, and D213. The active-site Proton acceptor is K235.

It belongs to the mandelate racemase/muconate lactonizing enzyme family. MenC type 1 subfamily. A divalent metal cation is required as a cofactor.

It catalyses the reaction (1R,6R)-6-hydroxy-2-succinyl-cyclohexa-2,4-diene-1-carboxylate = 2-succinylbenzoate + H2O. The protein operates within quinol/quinone metabolism; 1,4-dihydroxy-2-naphthoate biosynthesis; 1,4-dihydroxy-2-naphthoate from chorismate: step 4/7. Its pathway is quinol/quinone metabolism; menaquinone biosynthesis. Its function is as follows. Converts 2-succinyl-6-hydroxy-2,4-cyclohexadiene-1-carboxylate (SHCHC) to 2-succinylbenzoate (OSB). The polypeptide is o-succinylbenzoate synthase (Escherichia coli O7:K1 (strain IAI39 / ExPEC)).